Here is a 428-residue protein sequence, read N- to C-terminus: Forkhead box protein B2 (428 aa).

Residues 12–103 (QKPPYSYISL…GDMFENGSFL (92 aa)) constitute a DNA-binding region (fork-head). Disordered regions lie at residues 118–217 (HLHS…MQEA) and 408–428 (PTAA…LVHS). A compositionally biased stretch (basic residues) spans 136 to 163 (LHPHHPHHAHHHHHHHHHAAHHHHHHHP). 2 stretches are compositionally biased toward pro residues: residues 164 to 174 (PQPPPPPPPHM) and 183 to 192 (APAPQPPHLP). The span at 193 to 217 (SQPAQQPQPQSQPPQTSHPGKMQEA) shows a compositional bias: low complexity.

The protein localises to the nucleus. Functionally, transcription factor. The protein is Forkhead box protein B2 (Foxb2) of Mus musculus (Mouse).